The chain runs to 135 residues: Large ribosomal subunit protein uL16c (135 aa).

The protein belongs to the universal ribosomal protein uL16 family. Part of the 50S ribosomal subunit.

It is found in the plastid. Its subcellular location is the chloroplast. This Aethionema cordifolium (Lebanon stonecress) protein is Large ribosomal subunit protein uL16c.